Here is a 206-residue protein sequence, read N- to C-terminus: uncharacterized protein (206 aa).

4 helical membrane-spanning segments follow: residues 9 to 29, 47 to 67, 74 to 94, and 150 to 170; these read ILSL…SVLT, LGVV…LAFL, FFVI…INTI, and IAVI…FYAF.

It belongs to the Rht family.

The protein resides in the cell membrane. This is an uncharacterized protein from Synechocystis sp. (strain ATCC 27184 / PCC 6803 / Kazusa).